Reading from the N-terminus, the 2873-residue chain is WD repeat-containing protein 87 (2873 aa).

WD repeat units lie at residues 108-146, 199-239, 242-283, 368-407, 415-460, 516-553, and 565-604; these read PCRF…TGLQ, TSSG…PLHS, AHQS…RRLE, SILD…CPAK, NSQD…RLEK, LSSC…SSGS, and LHLC…IGIL. Disordered regions lie at residues 1049–1124, 1177–1199, 1392–1413, 1531–1607, and 2199–2338; these read FSLD…ESGT, DKRD…GKEA, EKKT…ERKV, SKSK…QEER, and KRKE…EEVD. Composition is skewed to basic residues over residues 1089–1101 and 1187–1197; these read VKKH…RGLK and KLKKKHKKKGK. The segment covering 1549 to 1574 has biased composition (basic and acidic residues); sequence EVSREGEEKEQQVTEEQRHIQEEHKW. Over residues 1575 to 1586 the composition is skewed to basic residues; the sequence is ARIHRKRARAEK. Basic and acidic residues-rich tracts occupy residues 1587–1607 and 2204–2213; these read KRAQ…QEER and KRGDKPKEKF. A compositionally biased stretch (acidic residues) spans 2244 to 2276; sequence SSEEEEEREEEEEREEEEEREEEEERKEEEEGE. Residues 2277-2287 are compositionally biased toward basic and acidic residues; it reads EKQVEKEEEEK. Acidic residues predominate over residues 2304 to 2337; sequence EVFEEKEEIMSEEETESLSDEEEEEESCSLEEEV.

In Homo sapiens (Human), this protein is WD repeat-containing protein 87 (WDR87).